The chain runs to 123 residues: MVWSELLEILAYSVDCSVNGDLYTNTSGEISTADILRFAEIVEYPSATLLTQNVRQTTPHNKQCTLLLKPFYSPCENNKRKKKSEGERVRSPRTFRGSESLSIQQLEVYRTTMVERRVSFTAQ.

Positions 76–97 (ENNKRKKKSEGERVRSPRTFRG) are disordered.

This is an uncharacterized protein from Saccharomyces cerevisiae (strain ATCC 204508 / S288c) (Baker's yeast).